We begin with the raw amino-acid sequence, 204 residues long: MFGGRRRRLPQDGTFNQTQPFDRLVGSRHSFSFDLKSATDRWPLVFLFEVVQYLFDRSFASSVVNSAFACNIFEVPFVKLKRRFSQVCFVAGQPLGYHGSWPTFALSHHILVWWCAKQVHPGVRFTSYAVLGDDVVIADQEVAKVYESALGGLGVKISYQKSLIPIQVLLSLLNASGLGNLVLKREIFPRESGVLSLMSVPSLA.

The protein resides in the mitochondrion. This is an uncharacterized protein from Arabidopsis thaliana (Mouse-ear cress).